The chain runs to 157 residues: Ribosomal RNA large subunit methyltransferase H (157 aa).

S-adenosyl-L-methionine is bound by residues L73, G105, and 124–129 (LSQMTF).

This sequence belongs to the RNA methyltransferase RlmH family. Homodimer.

The protein resides in the cytoplasm. It carries out the reaction pseudouridine(1915) in 23S rRNA + S-adenosyl-L-methionine = N(3)-methylpseudouridine(1915) in 23S rRNA + S-adenosyl-L-homocysteine + H(+). Functionally, specifically methylates the pseudouridine at position 1915 (m3Psi1915) in 23S rRNA. The protein is Ribosomal RNA large subunit methyltransferase H of Flavobacterium psychrophilum (strain ATCC 49511 / DSM 21280 / CIP 103535 / JIP02/86).